Consider the following 468-residue polypeptide: E3 ubiquitin-protein ligase RGLG2 (468 aa).

The segment at methionine 1 to lysine 89 is disordered. Glycine 2 is lipidated: N-myristoyl glycine. Residues glutamine 12–asparagine 45 are compositionally biased toward low complexity. Pro residues predominate over residues tyrosine 46 to leucine 65. Residues tyrosine 66–tyrosine 84 are compositionally biased toward low complexity. Residues asparagine 122–leucine 342 enclose the VWFA domain. The disordered stretch occupies residues phenylalanine 369–threonine 416. The RING-type zinc-finger motif lies at cysteine 425 to arginine 458.

In terms of assembly, interacts with the heterodimer UBC35/UEV1B, UBC35 alone, PIN1, but not with UCB2, UCB9, UEV1B or UEV1C alone. Interacts with ERF053. N-myristoylated. Ubiquitously expressed.

The protein localises to the cell membrane. It is found in the nucleus. The enzyme catalyses S-ubiquitinyl-[E2 ubiquitin-conjugating enzyme]-L-cysteine + [acceptor protein]-L-lysine = [E2 ubiquitin-conjugating enzyme]-L-cysteine + N(6)-ubiquitinyl-[acceptor protein]-L-lysine.. Its function is as follows. E3 ubiquitin-protein ligase that mediates the formation of 'Lys-63'-linked ubiquitin chains. Regulates apical dominance by acting on the auxin transport proteins abundance. Mediates ubiquitination and subsequent proteasomal degradation of ERF053 in response to drought stress. Acts as a negative regulator of drought stress response. The polypeptide is E3 ubiquitin-protein ligase RGLG2 (Arabidopsis thaliana (Mouse-ear cress)).